A 476-amino-acid chain; its full sequence is MSPQTETKASVGFKAGVKDYKLTYYTPDYETKDTDILAAFRVTPQPGVPPEEAGAAVAAESSTGTWTTVWTDGLTSLDRYKGRCYHIEPVAGEENQFIAYVAYPLDLFEEGSVTNMFTSIVGNVFGFKALRALRLEDLRIPTAYIKTFQGPPHGIQVERDKLNKYGRPLLGCTIKPKLGLSAKNYGRAVYECLRGGLDFTKDDENVNSQPFMRWRDRFLFCAEAIYKAQAETGEIKGHYLNATAGTCEEMIKRAVFARELGVPIVMHDYLTGGFTANTSLAHYCRDNGLLLHIHRAMHAVIDRQKNHGMHFRVLAKALRLSGGDHVHSGTVVGKLEGEREITLGFVDLLRDDFIEKDRSRGIYFTQDWVSLPGVLPVASGGIHVWHMPALTEIFGDDSVLQFGGGTLGHPWGNAPGAVANRVALEACVQARNEGRDLAREGNEIIREASKWSPELAAACEVWKEIKFEFEAMDTLD.

A propeptide spanning residues 1 to 2 is cleaved from the precursor; the sequence is MS. Position 3 is an N-acetylproline (Pro3). The residue at position 14 (Lys14) is an N6,N6,N6-trimethyllysine. Substrate-binding residues include Asn123 and Thr173. Lys175 acts as the Proton acceptor in catalysis. A substrate-binding site is contributed by Lys177. The Mg(2+) site is built by Lys201, Asp203, and Glu204. N6-carboxylysine is present on Lys201. Catalysis depends on His294, which acts as the Proton acceptor. 3 residues coordinate substrate: Arg295, His327, and Ser379.

This sequence belongs to the RuBisCO large chain family. Type I subfamily. In terms of assembly, heterohexadecamer of 8 large chains and 8 small chains; disulfide-linked. The disulfide link is formed within the large subunit homodimers. It depends on Mg(2+) as a cofactor. Post-translationally, the disulfide bond which can form in the large chain dimeric partners within the hexadecamer appears to be associated with oxidative stress and protein turnover.

It localises to the plastid. Its subcellular location is the chloroplast. It catalyses the reaction 2 (2R)-3-phosphoglycerate + 2 H(+) = D-ribulose 1,5-bisphosphate + CO2 + H2O. The catalysed reaction is D-ribulose 1,5-bisphosphate + O2 = 2-phosphoglycolate + (2R)-3-phosphoglycerate + 2 H(+). Its function is as follows. RuBisCO catalyzes two reactions: the carboxylation of D-ribulose 1,5-bisphosphate, the primary event in carbon dioxide fixation, as well as the oxidative fragmentation of the pentose substrate in the photorespiration process. Both reactions occur simultaneously and in competition at the same active site. The protein is Ribulose bisphosphate carboxylase large chain of Phaseolus vulgaris (Kidney bean).